Here is a 340-residue protein sequence, read N- to C-terminus: MGMEGCCSNKKVMEEEALVKKITGLAAAIGELPSLSPSPEVNALFTELVTSCIPPSTVDVDALGPDAQEMRARLIRLCADAEGHLEAHYSDLLAAHDNPLDHLTLFPYFNNYIKLSQLEHGLLARHVPGPAPARVAFLGSGPLPLSSLVLAARHLPDASFDNYDISGEANERASRLVRADADAGARMAFRTADVADVTTELEGYDVVFLAALVGMAAEEKARLVEHLGRHMAPGAALVVRSAHGARGFLYPVVDPEEIRRGGFEVLTVHHPEDEVINSVIIARKAAAPPPVAADRDVPVNMPMPAQCAVAVSRPCLGCACELGARAHQKMKEIAMEEMEA.

It belongs to the nicotianamine synthase (NAS)-like family. As to quaternary structure, homotrimer.

The catalysed reaction is 3 S-adenosyl-L-methionine = nicotianamine + 3 S-methyl-5'-thioadenosine + 3 H(+). Functionally, synthesizes nicotianamine, a polyamine that is the first intermediate in the synthesis of the phytosiderophores of the mugineic acid type found in gramineae which serves as a sensor for the physiological iron status within the plant, and/or might be involved in the transport of iron. This Hordeum vulgare (Barley) protein is Nicotianamine synthase 9 (NAS9).